We begin with the raw amino-acid sequence, 105 residues long: Large ribosomal subunit protein uL24 (105 aa).

The protein belongs to the universal ribosomal protein uL24 family. In terms of assembly, part of the 50S ribosomal subunit.

Functionally, one of two assembly initiator proteins, it binds directly to the 5'-end of the 23S rRNA, where it nucleates assembly of the 50S subunit. One of the proteins that surrounds the polypeptide exit tunnel on the outside of the subunit. This is Large ribosomal subunit protein uL24 from Aeromonas salmonicida (strain A449).